Reading from the N-terminus, the 365-residue chain is Short-chain dehydrogenase iccH (365 aa).

Residues L16, R52, and D70 each coordinate NADP(+). N-linked (GlcNAc...) asparagine glycosylation is present at N90. NADP(+) is bound by residues N102, Y221, K225, and S260. The active-site Proton donor is the Y221. The Lowers pKa of active site Tyr role is filled by K225. Residues 267 to 287 traverse the membrane as a helical segment; sequence IWVMFLLMKFVLPLLAPLAVW. N-linked (GlcNAc...) asparagine glycans are attached at residues N291 and N324.

Belongs to the short-chain dehydrogenases/reductases (SDR) family.

The protein localises to the membrane. It participates in mycotoxin biosynthesis. NADH-dependent flavin oxidoreductase; part of the gene cluster that mediates the biosynthesis of ilicicolin H, a 4-hydroxy-2-pyridonealkaloid that has potent and broad antifungal activities by inhibiting the mitochondrial respiration chain. IccA to iccE are sufficient for ilicicolin H biosynthesis and the roles of the remaining enzymes, iccF, iccG and iccH within the pathway have still to be determined. The biosynthesis of ilicicolin H starts with formation of the tetramic acid by the hybrid PKS-NRPS synthetase iccA with the partnering trans-enoyl reductase iccB since iccA lacks a designated enoylreductase (ER) domain. The cytochrome P450 monooxygenase iccC then catalyzes the ring expansion of the tetramate to the acyclic 2-pyridone. The pericyclase iccD further converts the acyclic 2-pyridone into 8-epi-ilicicolin H. Finally, the epimerase iccE converts 8-epi-ilicicolin H into ilicicolin H via epimerizationd. This Talaromyces variabilis (Penicillium variabile) protein is Short-chain dehydrogenase iccH.